The following is an 855-amino-acid chain: Homeobox-leucine zipper protein HOX33 (855 aa).

Positions 1-21 (MAAAAVGGRGERLSSSSPTAA) are disordered. Residues 26–89 (DAGKYVRYTP…NRRCREKQRK (64 aa)) constitute a DNA-binding region (homeobox). Residues 84-126 (REKQRKEASRLQTVNRKLNAMNKLLMEENDRLQKQVSRLVYEN) are a coiled coil. In terms of domain architecture, START spans 168–390 (DANNPAGLLA…LRHIRQIAHE (223 aa)).

This sequence belongs to the HD-ZIP homeobox family. Class III subfamily. Expressed in seedlings, roots, stems, leaf sheaths and blades and panicles.

Its subcellular location is the nucleus. In terms of biological role, probable transcription factor. The chain is Homeobox-leucine zipper protein HOX33 (HOX33) from Oryza sativa subsp. indica (Rice).